We begin with the raw amino-acid sequence, 433 residues long: Enolase (433 aa).

Glutamine 164 lines the (2R)-2-phosphoglycerate pocket. Residue glutamate 206 is the Proton donor of the active site. Residues aspartate 243, glutamate 289, and aspartate 316 each contribute to the Mg(2+) site. Residues lysine 341, arginine 370, serine 371, and lysine 392 each coordinate (2R)-2-phosphoglycerate. Catalysis depends on lysine 341, which acts as the Proton acceptor.

Belongs to the enolase family. Mg(2+) serves as cofactor.

Its subcellular location is the cytoplasm. The protein resides in the secreted. It is found in the cell surface. It catalyses the reaction (2R)-2-phosphoglycerate = phosphoenolpyruvate + H2O. It functions in the pathway carbohydrate degradation; glycolysis; pyruvate from D-glyceraldehyde 3-phosphate: step 4/5. Catalyzes the reversible conversion of 2-phosphoglycerate (2-PG) into phosphoenolpyruvate (PEP). It is essential for the degradation of carbohydrates via glycolysis. The protein is Enolase of Borreliella afzelii (strain PKo) (Borrelia afzelii).